Consider the following 261-residue polypeptide: Transcription factor BEE 3 (261 aa).

Residues 72–82 are compositionally biased toward low complexity; the sequence is NIQNNEESSSQ. 2 disordered regions span residues 72 to 158 and 242 to 261; these read NIQN…TDSH and VEMG…SWTL. The segment covering 95–123 has biased composition (polar residues); that stretch reads VSTSENSVSDQTLSTSSAQVSINGNISTK. Over residues 135–146 the composition is skewed to basic and acidic residues; it reads NREEEKEREVVH. Residues 153–203 enclose the bHLH domain; that stretch reads QATDSHSIAERVRRGKINERLKCLQDIVPGCYKTMGMATMLDEIINYVQSL.

As to quaternary structure, homodimer. Expressed in stems.

The protein resides in the nucleus. Functionally, positive regulator of brassinosteroid signaling. The chain is Transcription factor BEE 3 (BEE3) from Arabidopsis thaliana (Mouse-ear cress).